A 362-amino-acid polypeptide reads, in one-letter code: Cell death regulator Aven (362 aa).

3 disordered regions span residues 1–111, 214–237, and 253–362; these read MQAE…NYSK, VKPKRTDDGKGLGMQLKGPLGPGG, and VLLG…SMIS. Residues 8–17 are compositionally biased toward basic residues; that stretch reads RGGRGRRPGR. Gly residues predominate over residues 37 to 47; it reads RGGGGGGGGDG. Residues 50–60 are compositionally biased toward basic residues; it reads RRGRGRGRGFR. Over residues 61 to 72 the composition is skewed to gly residues; that stretch reads GARGGRGGGGAP. The segment covering 90–105 has biased composition (acidic residues); the sequence is VEDDSDAETYGEENDE. Position 94 is a phosphoserine (S94). K230 is subject to N6-methyllysine. Residues 350 to 362 are compositionally biased toward acidic residues; the sequence is EEELEDWLDSMIS.

In terms of assembly, binds Apaf-1, BCL-2 and BAD (Bcl-xl). Highly expressed in testis, ovary, thymus, prostate, spleen, small intestine, colon, heart, skeletal muscle, liver, kidney and pancreas.

It localises to the endomembrane system. Protects against apoptosis mediated by Apaf-1. In Homo sapiens (Human), this protein is Cell death regulator Aven (AVEN).